Reading from the N-terminus, the 435-residue chain is D-amino acid dehydrogenase (435 aa).

3–17 (VLILGSGVIGTTSAW) is a binding site for FAD.

Belongs to the DadA oxidoreductase family. It depends on FAD as a cofactor.

The enzyme catalyses a D-alpha-amino acid + A + H2O = a 2-oxocarboxylate + AH2 + NH4(+). It functions in the pathway amino-acid degradation; D-alanine degradation; NH(3) and pyruvate from D-alanine: step 1/1. Oxidative deamination of D-amino acids. The sequence is that of D-amino acid dehydrogenase from Xylella fastidiosa (strain 9a5c).